A 258-amino-acid chain; its full sequence is Acetylglutamate kinase (258 aa).

Substrate-binding positions include 44–45 (GG), arginine 66, and asparagine 158. Residues 181–186 (DVSGIL) and 209–211 (IIT) each bind ATP.

Belongs to the acetylglutamate kinase family. ArgB subfamily. Homodimer.

It localises to the cytoplasm. It carries out the reaction N-acetyl-L-glutamate + ATP = N-acetyl-L-glutamyl 5-phosphate + ADP. Its pathway is amino-acid biosynthesis; L-arginine biosynthesis; N(2)-acetyl-L-ornithine from L-glutamate: step 2/4. Functionally, catalyzes the ATP-dependent phosphorylation of N-acetyl-L-glutamate. The sequence is that of Acetylglutamate kinase from Escherichia coli O6:K15:H31 (strain 536 / UPEC).